The sequence spans 1090 residues: Vinculin (1090 aa).

A run of 2 repeats spans residues 339–446 and 455–561. Residues 339 to 561 form a 2 X repeats region; it reads DADNVTVMRK…LKNALRDLGD (223 aa). Disordered regions lie at residues 811–842 and 864–895; these read GVPM…SQVI and DIPA…EEET. Residues 817 to 830 are compositionally biased toward polar residues; sequence GRHSSYQESISRAS. Residues 866–887 show a composition bias toward pro residues; it reads PAPPRPPPPVELSPPPRPPPPP.

The protein belongs to the vinculin/alpha-catenin family. As to quaternary structure, may interact with sorb-1. Expressed in gonadal sheath cells and the spermatheca. Expressed in body wall muscles.

Its subcellular location is the cytoplasm. The protein localises to the cytoskeleton. The protein resides in the cell junction. It localises to the adherens junction. It is found in the cell membrane. Its subcellular location is the focal adhesion. In terms of biological role, involved in cell adhesion. May be involved in the attachment of the actin-based microfilaments to the plasma membrane. Involved in ovulation. The protein is Vinculin of Caenorhabditis elegans.